The following is a 540-amino-acid chain: Phosphoenolpyruvate carboxykinase (ATP) (540 aa).

A substrate-binding site is contributed by arginine 65. The residue at position 87 (lysine 87) is an N6-acetyllysine. Substrate contacts are provided by tyrosine 207 and lysine 213. Residues lysine 213, histidine 232, and 248-256 contribute to the ATP site; that span reads GLSGTGKTT. Positions 213 and 232 each coordinate Mn(2+). Mn(2+) is bound at residue aspartate 269. Residues glutamate 297, arginine 333, 449-450, and threonine 455 each bind ATP; that span reads RI. A substrate-binding site is contributed by arginine 333. Lysine 523 carries the N6-acetyllysine modification.

Belongs to the phosphoenolpyruvate carboxykinase (ATP) family. As to quaternary structure, monomer. Mn(2+) is required as a cofactor.

The protein localises to the cytoplasm. The enzyme catalyses oxaloacetate + ATP = phosphoenolpyruvate + ADP + CO2. The protein operates within carbohydrate biosynthesis; gluconeogenesis. Involved in the gluconeogenesis. Catalyzes the conversion of oxaloacetate (OAA) to phosphoenolpyruvate (PEP) through direct phosphoryl transfer between the nucleoside triphosphate and OAA. In Shigella dysenteriae serotype 1 (strain Sd197), this protein is Phosphoenolpyruvate carboxykinase (ATP).